Reading from the N-terminus, the 647-residue chain is Probable cobalt/nickel-exporting P-type ATPase (647 aa).

Helical transmembrane passes span 33–53, 55–75, 94–114, 260–280, and 291–311; these read WAAA…LGAP, AVVW…PAWV, AAIG…IVIF, AGVV…GADL, and MIVA…LSAI. Residue aspartate 339 is the 4-aspartylphosphate intermediate of the active site. Positions 532 and 536 each coordinate Mg(2+). The helical transmembrane segment at 587-607 threads the bilayer; it reads VIANLVMAGAAITTLVLWDLF.

It belongs to the cation transport ATPase (P-type) (TC 3.A.3) family. Type IB subfamily.

It is found in the cell membrane. It catalyses the reaction Ni(2+)(out) + ATP + H2O = Ni(2+)(in) + ADP + phosphate + H(+). The catalysed reaction is Co(2+)(out) + ATP + H2O = Co(2+)(in) + ADP + phosphate + H(+). Functionally, involved in heavy metal homeostasis. Probably exports nickel and cobalt ions out of the cell. This is Probable cobalt/nickel-exporting P-type ATPase (ctpD) from Mycolicibacterium smegmatis (strain ATCC 700084 / mc(2)155) (Mycobacterium smegmatis).